The chain runs to 356 residues: Homoserine O-acetyltransferase (356 aa).

In terms of domain architecture, AB hydrolase-1 spans 50-335; the sequence is NVILVCHALT…DEPYGHDAFL (286 aa). The active-site Nucleophile is the Ser-146. Arg-215 contacts substrate. Residues Asp-302 and His-331 contribute to the active site. Asp-332 contacts substrate.

This sequence belongs to the AB hydrolase superfamily. MetX family. Homodimer.

Its subcellular location is the cytoplasm. It carries out the reaction L-homoserine + acetyl-CoA = O-acetyl-L-homoserine + CoA. It participates in amino-acid biosynthesis; L-methionine biosynthesis via de novo pathway; O-acetyl-L-homoserine from L-homoserine: step 1/1. In terms of biological role, transfers an acetyl group from acetyl-CoA to L-homoserine, forming acetyl-L-homoserine. The protein is Homoserine O-acetyltransferase of Chlorobaculum parvum (strain DSM 263 / NCIMB 8327) (Chlorobium vibrioforme subsp. thiosulfatophilum).